We begin with the raw amino-acid sequence, 55 residues long: Small ribosomal subunit protein eS31 (55 aa).

Positions 21, 24, 39, and 42 each coordinate Zn(2+). The C4-type zinc finger occupies 21–42; that stretch reads CPRCGPGVFLAEHADRFTCGRC.

Belongs to the eukaryotic ribosomal protein eS31 family. As to quaternary structure, part of the 30S ribosomal subunit. Zn(2+) serves as cofactor.

This is Small ribosomal subunit protein eS31 from Thermoplasma volcanium (strain ATCC 51530 / DSM 4299 / JCM 9571 / NBRC 15438 / GSS1).